The following is a 231-amino-acid chain: UPF0758 protein RBAM_025090 (231 aa).

Residues 109 to 231 (VIRSPEDGAK…FVSLKEKGYL (123 aa)) form the MPN domain. Positions 180, 182, and 193 each coordinate Zn(2+). Residues 180-193 (HNHPSGDPTPSRED) carry the JAMM motif motif.

This sequence belongs to the UPF0758 family.

The protein is UPF0758 protein RBAM_025090 of Bacillus velezensis (strain DSM 23117 / BGSC 10A6 / LMG 26770 / FZB42) (Bacillus amyloliquefaciens subsp. plantarum).